The following is a 284-amino-acid chain: 2-dehydro-3-deoxyphosphooctonate aldolase (284 aa).

This sequence belongs to the KdsA family.

It is found in the cytoplasm. The catalysed reaction is D-arabinose 5-phosphate + phosphoenolpyruvate + H2O = 3-deoxy-alpha-D-manno-2-octulosonate-8-phosphate + phosphate. It participates in carbohydrate biosynthesis; 3-deoxy-D-manno-octulosonate biosynthesis; 3-deoxy-D-manno-octulosonate from D-ribulose 5-phosphate: step 2/3. Its pathway is bacterial outer membrane biogenesis; lipopolysaccharide biosynthesis. This Actinobacillus pleuropneumoniae serotype 7 (strain AP76) protein is 2-dehydro-3-deoxyphosphooctonate aldolase.